A 62-amino-acid polypeptide reads, in one-letter code: MTLVFQLAVFALIATSSILLISVPVVFASPDGWSSNKNVVFSGTSLWIGLVFLVGILNSLIS.

Transmembrane regions (helical) follow at residues 8 to 28 (AVFA…VVFA) and 41 to 61 (FSGT…NSLI).

The protein belongs to the PsbZ family. As to quaternary structure, PSII is composed of 1 copy each of membrane proteins PsbA, PsbB, PsbC, PsbD, PsbE, PsbF, PsbH, PsbI, PsbJ, PsbK, PsbL, PsbM, PsbT, PsbY, PsbZ, Psb30/Ycf12, at least 3 peripheral proteins of the oxygen-evolving complex and a large number of cofactors. It forms dimeric complexes.

The protein resides in the plastid. The protein localises to the chloroplast thylakoid membrane. Its function is as follows. May control the interaction of photosystem II (PSII) cores with the light-harvesting antenna, regulates electron flow through the 2 photosystem reaction centers. PSII is a light-driven water plastoquinone oxidoreductase, using light energy to abstract electrons from H(2)O, generating a proton gradient subsequently used for ATP formation. The chain is Photosystem II reaction center protein Z from Jasminum nudiflorum (Winter jasmine).